The following is a 529-amino-acid chain: MSPMSLQDQVATRRTFAIISHPDAGKTTITEKLLLYGNLIQSAGTVKGKKSGKHATSDWMEMEKERGISVTTSVMQFPYKGATVNLLDTPGHADFSEDTYRTLTAVDSALMVIDAAKGVEQRTVKLMEVCRLRDTPILTFINKLDRDVRDGIDVLDEIEDVLNIECAPITWPIGMGKSFKGVYNLLTDTTVLYKTGQGHTVQDVREVKGLNNPELDEAVGTDYAEELRDTLELVQGASHEFDLERFLAGKLTPVFFGTALGNFGVDHMLDGLVQWAPPPQPRDATARTVEADEPKMTGFVFKIQANMDPRHRDRIAFMRICSGTYRKGIKLKQVRTGKDVRIADALTFLAGERDNVEEAFSGDIIGLHNHGTIQIGDTFTEGEELAFTGIPHFAPELFQRVVLNDPLKSKQLHKGLTQLAEEGATQVFFPLRNNDVILGAVGSLQFDVVAARLKGEYGVDCRYEPVSVATARWVEADSDKELAAFERKAHDNLSRDGAGHLTYLAPTRVNLQLAQERHPDIRFRETREI.

The 270-residue stretch at Ala-11 to Gln-280 folds into the tr-type G domain. Residues Ser-20–Thr-27, Asp-88–His-92, and Asn-142–Asp-145 each bind GTP.

Belongs to the TRAFAC class translation factor GTPase superfamily. Classic translation factor GTPase family. PrfC subfamily.

The protein resides in the cytoplasm. Increases the formation of ribosomal termination complexes and stimulates activities of RF-1 and RF-2. It binds guanine nucleotides and has strong preference for UGA stop codons. It may interact directly with the ribosome. The stimulation of RF-1 and RF-2 is significantly reduced by GTP and GDP, but not by GMP. This is Peptide chain release factor 3 from Alcanivorax borkumensis (strain ATCC 700651 / DSM 11573 / NCIMB 13689 / SK2).